Here is an 816-residue protein sequence, read N- to C-terminus: Fibroblast growth factor receptor 1 (816 aa).

A signal peptide spans 1 to 23; the sequence is MLSWRHLVFWAMLVMATLSAARP. Over 24–374 the chain is Extracellular; the sequence is APTLPEQVSP…VIMTSPLYLE (351 aa). Residues 25–118 form the Ig-like C2-type 1 domain; it reads PTLPEQVSPK…ETTFFAVNVS (94 aa). Cys54 and Cys100 are disulfide-bonded. Residues Asn76 and Asn116 are each glycosylated (N-linked (GlcNAc...) asparagine). Residues 118–152 form a disordered region; it reads SDRIPSVEDDDDDDEKSSSEEKEAENSKPNPVAPF. The segment covering 133-143 has biased composition (basic and acidic residues); that stretch reads KSSSEEKEAEN. Ig-like C2-type domains follow at residues 156–244 and 253–355; these read PEKM…YQLD and PILQ…AWLT. A disulfide bridge connects residues Cys176 and Cys228. Asn238, Asn262, Asn294, Asn315, and Asn328 each carry an N-linked (GlcNAc...) asparagine glycan. Cys275 and Cys339 are oxidised to a cystine. The helical transmembrane segment at 375–395 threads the bilayer; the sequence is IIIYCTGAFLISCMLVTVIIY. At 396 to 816 the chain is on the cytoplasmic side; the sequence is KMKNTTKKTD…QHANGGLKKR (421 aa). At Tyr459 the chain carries Phosphotyrosine; by autocatalysis. Residues 474–763 enclose the Protein kinase domain; it reads LILGKPLGEG…VAMTSNQEYL (290 aa). ATP-binding positions include 480–486, Lys510, 558–560, and Asn564; these read LGEGCFG and EYA. 2 positions are modified to phosphotyrosine; by autocatalysis: Tyr579 and Tyr581. The active-site Proton acceptor is the Asp619. Positions 623 and 637 each coordinate ATP. Residues Tyr649, Tyr650, Tyr726, and Tyr762 each carry the phosphotyrosine; by autocatalysis modification. The segment at 776 to 816 is disordered; it reads FPDTRSSTCSSGEDSVFSHDPLPDEPCLPKYQHANGGLKKR. The span at 779 to 788 shows a compositional bias: polar residues; the sequence is TRSSTCSSGE.

The protein belongs to the protein kinase superfamily. Tyr protein kinase family. Fibroblast growth factor receptor subfamily. As to quaternary structure, monomer. Homodimer after ligand binding. Post-translationally, autophosphorylated. Binding of FGF family members together with heparan sulfate proteoglycan or heparin promotes receptor dimerization and autophosphorylation on tyrosine residues. Autophosphorylation occurs in trans between the two FGFR molecules present in the dimer and proceeds in a highly ordered manner. Phosphotyrosine residues provide docking sites for interacting proteins and so are crucial for FGFR1 function and its regulation. Ubiquitinated. FGFR1 is rapidly ubiquitinated after autophosphorylation, leading to internalization and degradation. In terms of processing, N-glycosylated in the endoplasmic reticulum. The N-glycan chains undergo further maturation to an Endo H-resistant form in the Golgi apparatus.

It localises to the cell membrane. It is found in the nucleus. The protein localises to the cytoplasm. Its subcellular location is the cytosol. The protein resides in the cytoplasmic vesicle. The enzyme catalyses L-tyrosyl-[protein] + ATP = O-phospho-L-tyrosyl-[protein] + ADP + H(+). With respect to regulation, present in an inactive conformation in the absence of bound ligand. Ligand binding leads to dimerization and activation by sequential autophosphorylation on tyrosine residues. Functionally, tyrosine-protein kinase that acts as a cell-surface receptor for fibroblast growth factors and plays an essential role in the regulation of embryonic development, cell proliferation, differentiation and migration. Required for normal mesoderm patterning and normal skeletogenesis. Phosphorylates PLCG1, FRS2, GAB1 and SHB. Ligand binding leads to the activation of several signaling cascades. Activation of PLCG1 leads to the production of the cellular signaling molecules diacylglycerol and inositol-1,4,5-trisphosphate. Phosphorylation of FRS2 triggers recruitment of GRB2, GAB1, PIK3R1 and SOS1, and mediates activation of RAS, MAPK1/ERK2, MAPK3/ERK1 and the MAP kinase signaling pathway, as well as of the AKT1 signaling pathway. Promotes phosphorylation of SHC1, STAT1 and PTPN11/SHP2. In the nucleus, enhances RPS6KA1 and CREB1 activity and contributes to the regulation of transcription. FGFR1 signaling is down-regulated by ubiquitination, internalization and degradation. This is Fibroblast growth factor receptor 1 (FGFR1) from Pleurodeles waltl (Iberian ribbed newt).